The following is a 432-amino-acid chain: MSFTIETTQGLERRVQITVPADTVEGAVREELKRVAKTARVDGFRKGKVPPHIIEKRFGASVRHDVLGDVLQSHFFNVVMEQKVNLAGRPAFAVEQFEAGKDLVFTATFEVYPEVALQGLDQIKVEKPVVEISEADIDKMIDVLRKQQATWAETAEAASAEDRVVIDFVGSVDGEVFEGGKAEDFTLFMGQGRMIPGFEEGIVGHKAGEQFDIDVTFPEEYHAENLKGKAAKFAITLKKVEVMVLPELTDEFVAKFGPNTKTVDDLRNEIRKNMQRELKNALTAKVKGQVIDGLLAQNAIDVPASAVEQEIEVLRGQAAQRFGGNKEQAAQLPRELFEEQAKRRVQVGLLLAEVIASHELKVDEARAKTMIEEIASAYEQPAEVVEYYSKNKELMNNIRNVVLEEQAVDAVLAKAQVTEKAASFDDVMNPQA.

Residues 161-246 form the PPIase FKBP-type domain; it reads EDRVVIDFVG…LKKVEVMVLP (86 aa).

It belongs to the FKBP-type PPIase family. Tig subfamily.

The protein localises to the cytoplasm. The catalysed reaction is [protein]-peptidylproline (omega=180) = [protein]-peptidylproline (omega=0). Functionally, involved in protein export. Acts as a chaperone by maintaining the newly synthesized protein in an open conformation. Functions as a peptidyl-prolyl cis-trans isomerase. This Pasteurella multocida (strain Pm70) protein is Trigger factor (tig).